Reading from the N-terminus, the 179-residue chain is Large ribosomal subunit protein uL5 (179 aa).

Belongs to the universal ribosomal protein uL5 family. In terms of assembly, part of the 50S ribosomal subunit; part of the 5S rRNA/L5/L18/L25 subcomplex. Contacts the 5S rRNA and the P site tRNA. Forms a bridge to the 30S subunit in the 70S ribosome.

This is one of the proteins that bind and probably mediate the attachment of the 5S RNA into the large ribosomal subunit, where it forms part of the central protuberance. In the 70S ribosome it contacts protein S13 of the 30S subunit (bridge B1b), connecting the 2 subunits; this bridge is implicated in subunit movement. Contacts the P site tRNA; the 5S rRNA and some of its associated proteins might help stabilize positioning of ribosome-bound tRNAs. The polypeptide is Large ribosomal subunit protein uL5 (Geobacter sulfurreducens (strain ATCC 51573 / DSM 12127 / PCA)).